The primary structure comprises 460 residues: Bifunctional protein GlmU (460 aa).

The tract at residues 1–229 (MSHYAIILAA…FEESLGVNDR (229 aa)) is pyrophosphorylase. Residues 8–11 (LAAG), Lys22, Gln72, and 77–78 (GT) contribute to the UDP-N-acetyl-alpha-D-glucosamine site. Residue Asp102 coordinates Mg(2+). UDP-N-acetyl-alpha-D-glucosamine contacts are provided by Gly139, Glu154, Asn169, and Asn227. Asn227 is a binding site for Mg(2+). The tract at residues 230–250 (VALATAEDVMRRRINKAHMIN) is linker. The N-acetyltransferase stretch occupies residues 251–460 (GVTFQNPNAT…KKPHHPSQQK (210 aa)). Residues Arg332 and Lys350 each coordinate UDP-N-acetyl-alpha-D-glucosamine. Catalysis depends on His362, which acts as the Proton acceptor. The UDP-N-acetyl-alpha-D-glucosamine site is built by Tyr365 and Asn376. Acetyl-CoA-binding positions include Ala379, 385–386 (NY), Ser404, Ala422, and Arg439.

It in the N-terminal section; belongs to the N-acetylglucosamine-1-phosphate uridyltransferase family. The protein in the C-terminal section; belongs to the transferase hexapeptide repeat family. Homotrimer. Requires Mg(2+) as cofactor.

It localises to the cytoplasm. It carries out the reaction alpha-D-glucosamine 1-phosphate + acetyl-CoA = N-acetyl-alpha-D-glucosamine 1-phosphate + CoA + H(+). The catalysed reaction is N-acetyl-alpha-D-glucosamine 1-phosphate + UTP + H(+) = UDP-N-acetyl-alpha-D-glucosamine + diphosphate. Its pathway is nucleotide-sugar biosynthesis; UDP-N-acetyl-alpha-D-glucosamine biosynthesis; N-acetyl-alpha-D-glucosamine 1-phosphate from alpha-D-glucosamine 6-phosphate (route II): step 2/2. It participates in nucleotide-sugar biosynthesis; UDP-N-acetyl-alpha-D-glucosamine biosynthesis; UDP-N-acetyl-alpha-D-glucosamine from N-acetyl-alpha-D-glucosamine 1-phosphate: step 1/1. The protein operates within bacterial outer membrane biogenesis; LPS lipid A biosynthesis. In terms of biological role, catalyzes the last two sequential reactions in the de novo biosynthetic pathway for UDP-N-acetylglucosamine (UDP-GlcNAc). The C-terminal domain catalyzes the transfer of acetyl group from acetyl coenzyme A to glucosamine-1-phosphate (GlcN-1-P) to produce N-acetylglucosamine-1-phosphate (GlcNAc-1-P), which is converted into UDP-GlcNAc by the transfer of uridine 5-monophosphate (from uridine 5-triphosphate), a reaction catalyzed by the N-terminal domain. The sequence is that of Bifunctional protein GlmU from Streptococcus thermophilus (strain CNRZ 1066).